Reading from the N-terminus, the 620-residue chain is Glutathione-regulated potassium-efflux system protein KefC (620 aa).

12 consecutive transmembrane segments (helical) span residues 4-24 (HTLI…PIAV), 26-46 (LGLG…PWGL), 54-74 (SILH…GLEL), 90-110 (GALQ…LLGL), 114-134 (VAEL…MQAM), 149-169 (FAVL…IPLL), 178-198 (MGAF…VVLL), 218-238 (VFSA…EEVG), 270-290 (GLLL…GTLI), 294-314 (LRIV…LWLI), 327-347 (WFAV…GAAQ), and 359-379 (SLTL…VILN). In terms of domain architecture, RCK N-terminal spans 399 to 518 (QPRVIIAGFG…AGVEKPERET (120 aa)). The disordered stretch occupies residues 597–620 (GWQGTEEGKHTGNMADEPETKPSS).

Belongs to the monovalent cation:proton antiporter 2 (CPA2) transporter (TC 2.A.37) family. KefC subfamily. Homodimer. Interacts with the regulatory subunit KefF.

The protein localises to the cell inner membrane. Its function is as follows. Pore-forming subunit of a potassium efflux system that confers protection against electrophiles. Catalyzes K(+)/H(+) antiport. The sequence is that of Glutathione-regulated potassium-efflux system protein KefC from Escherichia coli O17:K52:H18 (strain UMN026 / ExPEC).